A 583-amino-acid polypeptide reads, in one-letter code: Radixin (583 aa).

Positions 5–295 (INVRVTTMDA…GNHELYMRRR (291 aa)) constitute an FERM domain. 60–63 (KLNK) lines the a 1,2-diacyl-sn-glycero-3-phospho-(1D-myo-inositol) pocket. Residue Lys83 is modified to N6-succinyllysine. Lys278 serves as a coordination point for a 1,2-diacyl-sn-glycero-3-phospho-(1D-myo-inositol). Disordered stretches follow at residues 310-336 (REEKHQKQLERAQLENEKKKREIAEKE), 374-407 (ELDQERKRAKEEAERLEKERRAAEEAKSAIAKQA), and 458-526 (KTKE…RVNK). Basic and acidic residues predominate over residues 374–400 (ELDQERKRAKEEAERLEKERRAAEEAK). Residues 469–480 (APPPPPPPPVVP) are compositionally biased toward pro residues. Basic and acidic residues-rich tracts occupy residues 483–492 (ENEHDEHDEN) and 506–525 (MNHRSEEERVTETQKNERVN). Thr564 bears the Phosphothreonine; by ROCK2 mark.

Interacts with CPNE1 (via VWFA domain) and CPNE4 (via VWFA domain). Binds NHERF1. Interacts with NHERF1, NHERF2, LAYN, MME/NEP and ICAM2. Interacts (via FERM domain) with SPN/CD43 cytoplasmic tail. Interacts with CD44. Interacts with CLIC5; may work together in a complex which also includes EZR and MYO6 to stabilize linkages between the plasma membrane and subjacent actin cytoskeleton at the base of stereocilia. Phosphorylated by tyrosine-protein kinases. Phosphorylation by ROCK2 suppresses the head-to-tail association of the N-terminal and C-terminal halves resulting in an opened conformation which is capable of actin and membrane-binding.

The protein localises to the cell membrane. It localises to the cytoplasm. Its subcellular location is the cytoskeleton. It is found in the cleavage furrow. The protein resides in the cell projection. The protein localises to the microvillus. It localises to the stereocilium. A head-to-tail association, of the N-terminal and C-terminal halves results in a closed conformation (inactive form) which is incapable of actin or membrane-binding. Its function is as follows. Probably plays a crucial role in the binding of the barbed end of actin filaments to the plasma membrane. In Sus scrofa (Pig), this protein is Radixin (RDX).